A 40-amino-acid polypeptide reads, in one-letter code: Amyloid-beta precursor protein (40 aa).

It belongs to the APP family. Binds, via its C-terminus, to the PID domain of several cytoplasmic proteins, including APBB family members, the APBA family, MAPK8IP1, SHC1 and NUMB and DAB1. Binding to DAB1 inhibits its serine phosphorylation. Interacts (via NPXY motif) with DAB2 (via PID domain); the interaction is impaired by tyrosine phosphorylation of the NPXY motif. Also interacts with GPCR-like protein BPP, APPBP1, IB1, KNS2 (via its TPR domains), APPBP2 (via BaSS) and DDB1. In vitro, it binds MAPT via the MT-binding domains. Associates with microtubules in the presence of ATP and in a kinesin-dependent manner. Interacts, through a C-terminal domain, with GNAO1. Interacts with CPEB1, ANKS1B and AGER. Interacts with ITM2B. Interacts with ITM2C. Interacts with IDE. Can form homodimers; dimerization is enhanced in the presence of Cu(2+) ions. Can form homodimers; this is promoted by heparin binding. Interacts with SORL1 (via N-terminal ectodomain); this interaction retains APP in the trans-Golgi network and reduces processing into soluble APP-alpha and amyloid-beta peptides. Interacts with PLD3. Interacts with VDAC1. Interacts with NSG1; could regulate APP processing. Interacts with LRRK2. Interacts (via cytoplasmic domain) with KIF5B. Interacts (via C-terminus) with APBB2/FE65L1 (via C-terminus). Interacts (via intracellular domain) with APBB3. In terms of processing, proteolytically processed under normal cellular conditions. Cleavage either by alpha-secretase, beta-secretase or theta-secretase leads to generation and extracellular release of soluble APP peptides, S-APP-alpha and S-APP-beta, and the retention of corresponding membrane-anchored C-terminal fragments, C80, C83 and C99. Subsequent processing of C80 and C83 by gamma-secretase yields P3 peptides. This is the major secretory pathway and is non-amyloidogenic. Alternatively, presenilin/nicastrin-mediated gamma-secretase processing of C99 releases the amyloid-beta proteins, amyloid-beta protein 40 and amyloid-beta protein 42, major components of amyloid plaques, and the cytotoxic C-terminal fragments, gamma-CTF(50), gamma-CTF(57) and gamma-CTF(59). PSEN1 cleavage is more efficient with C83 than with C99 as substrate (in vitro). Amyloid-beta protein 40 and Amyloid-beta protein 42 are cleaved by ACE. Many other minor amyloid-beta peptides, amyloid-beta 1-X peptides, are found in cerebral spinal fluid (CSF) including the amyloid-beta X-15 peptides, produced from the cleavage by alpha-secretase.

The protein resides in the cell membrane. The protein localises to the membrane. It localises to the perikaryon. Its subcellular location is the cell projection. It is found in the growth cone. The protein resides in the clathrin-coated pit. The protein localises to the early endosome. It localises to the cytoplasmic vesicle. In terms of biological role, functions as a cell surface receptor and performs physiological functions on the surface of neurons relevant to neurite growth, neuronal adhesion and axonogenesis. Interaction between APP molecules on neighboring cells promotes synaptogenesis. Involved in cell mobility and transcription regulation through protein-protein interactions. Can promote transcription activation through binding to APBB1-KAT5 and inhibit Notch signaling through interaction with Numb. Couples to apoptosis-inducing pathways such as those mediated by G(o) and JIP. Inhibits G(o)-alpha ATPase activity. Acts as a kinesin I membrane receptor, mediating the axonal transport of beta-secretase and presenilin 1. May be involved in copper homeostasis/oxidative stress through copper ion reduction. In vitro, copper-metallated APP induces neuronal death directly or is potentiated through Cu(2+)-mediated low-density lipoprotein oxidation. Can regulate neurite outgrowth through binding to components of the extracellular matrix such as heparin and collagen I and IV. Induces a AGER-dependent pathway that involves activation of p38 MAPK, resulting in internalization of amyloid-beta peptide and mitochondrial dysfunction in cultured cortical neurons. Provides Cu(2+) ions for GPC1 which are required for release of nitric oxide (NO) and subsequent degradation of the heparan sulfate chains on GPC1. The sequence is that of Amyloid-beta precursor protein from Felis catus (Cat).